Reading from the N-terminus, the 74-residue chain is RNA-binding protein Hfq (74 aa).

In terms of domain architecture, Sm spans 9 to 69 (DQFLNQLRKE…ISTFVPQKNV (61 aa)).

Belongs to the Hfq family. Homohexamer.

Functionally, RNA chaperone that binds small regulatory RNA (sRNAs) and mRNAs to facilitate mRNA translational regulation in response to envelope stress, environmental stress and changes in metabolite concentrations. Also binds with high specificity to tRNAs. This is RNA-binding protein Hfq from Bacillus cereus (strain Q1).